The following is a 97-amino-acid chain: DNA/RNA-binding protein Alba (97 aa).

An N6-acetyllysine modification is found at K15.

It belongs to the histone-like Alba family. Acetylated. Acetylation at Lys-15 decreases DNA-binding affinity.

It is found in the cytoplasm. It localises to the chromosome. In terms of biological role, binds double-stranded DNA tightly but without sequence specificity. Involved in DNA compaction. The protein is DNA/RNA-binding protein Alba of Sulfolobus acidocaldarius (strain ATCC 33909 / DSM 639 / JCM 8929 / NBRC 15157 / NCIMB 11770).